Consider the following 283-residue polypeptide: NADH-ubiquinone oxidoreductase 30.4 kDa subunit, mitochondrial (283 aa).

The N-terminal 17 residues, 1–17, are a transit peptide targeting the mitochondrion; the sequence is MASKLCRSRALASALRS. The disordered stretch occupies residues 258–283; that stretch reads GAGIDRKPESFKLPTPKPETKPEEKK.

Belongs to the complex I 30 kDa subunit family. In terms of assembly, complex I is composed of about 40 different subunits. This is a component of the iron-sulfur protein fraction.

It localises to the mitochondrion inner membrane. The enzyme catalyses a ubiquinone + NADH + 5 H(+)(in) = a ubiquinol + NAD(+) + 4 H(+)(out). Its function is as follows. Core subunit of the mitochondrial membrane respiratory chain NADH dehydrogenase (Complex I) that is believed to belong to the minimal assembly required for catalysis. Complex I functions in the transfer of electrons from NADH to the respiratory chain. The immediate electron acceptor for the enzyme is believed to be ubiquinone. The polypeptide is NADH-ubiquinone oxidoreductase 30.4 kDa subunit, mitochondrial (nuo-31) (Neurospora crassa (strain ATCC 24698 / 74-OR23-1A / CBS 708.71 / DSM 1257 / FGSC 987)).